The chain runs to 306 residues: MEVTFFGTSAGLPTKERNTQAIALNLEPYSNSIWLFDVGEGTQHQILHHAIKLGKVTHIFITHMHGDHIFGLPGLLSSRSFQGGEQKPLTLVGPKGIKAYVEMSMNLSESHLNYPITYIEIDDHLTYHHDGFTVEAHLLNHGIPSYGYRVMAPETTGTINVEALKNIGLEPGPKYQEVKSHDTFEHNGQVYQSKDFRGESKQGPVVAIFGDTKPCSNERVISRDADVMVHEATYIDGEKHLANNYHHSHIEDVFALIKEANVKRTLITHLSNRYNTEDINEIYQTLIQNEDTPNFNFVKDFDSFKI.

7 residues coordinate Zn(2+): histidine 63, histidine 65, aspartate 67, histidine 68, histidine 141, aspartate 211, and histidine 269. Aspartate 67 acts as the Proton acceptor in catalysis.

It belongs to the RNase Z family. As to quaternary structure, homodimer. Zn(2+) serves as cofactor.

The catalysed reaction is Endonucleolytic cleavage of RNA, removing extra 3' nucleotides from tRNA precursor, generating 3' termini of tRNAs. A 3'-hydroxy group is left at the tRNA terminus and a 5'-phosphoryl group is left at the trailer molecule.. Its function is as follows. Zinc phosphodiesterase, which displays some tRNA 3'-processing endonuclease activity. Probably involved in tRNA maturation, by removing a 3'-trailer from precursor tRNA. The protein is Ribonuclease Z of Staphylococcus aureus (strain USA300).